A 106-amino-acid polypeptide reads, in one-letter code: ATP-dependent Clp protease adapter protein ClpS (106 aa).

Residues 1 to 13 are compositionally biased toward polar residues; the sequence is MGNNSTWSQSENL. Residues 1-21 are disordered; that stretch reads MGNNSTWSQSENLTADKQKEK.

This sequence belongs to the ClpS family. As to quaternary structure, binds to the N-terminal domain of the chaperone ClpA.

Involved in the modulation of the specificity of the ClpAP-mediated ATP-dependent protein degradation. This Pectobacterium carotovorum subsp. carotovorum (strain PC1) protein is ATP-dependent Clp protease adapter protein ClpS.